Reading from the N-terminus, the 213-residue chain is Probable inactive serine/threonine-protein kinase DDB_G0280559 (213 aa).

Residues 1-211 (MVLRYSYVFK…WNEIVNHSFF (211 aa)) form the Protein kinase domain.

Belongs to the protein kinase superfamily. Ser/Thr protein kinase family.

The sequence is that of Probable inactive serine/threonine-protein kinase DDB_G0280559 from Dictyostelium discoideum (Social amoeba).